We begin with the raw amino-acid sequence, 106 residues long: Large ribosomal subunit protein bL21 (106 aa).

This sequence belongs to the bacterial ribosomal protein bL21 family. As to quaternary structure, part of the 50S ribosomal subunit. Contacts protein L20.

This protein binds to 23S rRNA in the presence of protein L20. The chain is Large ribosomal subunit protein bL21 from Syntrophobacter fumaroxidans (strain DSM 10017 / MPOB).